A 398-amino-acid chain; its full sequence is Growth-regulating factor 3 (398 aa).

The segment covering 1-17 (MDLQLKQWRSQQQQQHQ) has biased composition (low complexity). Residues 1 to 32 (MDLQLKQWRSQQQQQHQTESEEQPSAAKIPKH) form a disordered region. The 36-residue stretch at 76–111 (FFSWAQWQELELQALIYRYMLAGAAVPQELLLPIKK) folds into the QLQ domain. Positions 144 to 188 (DPEPGRCRRTDGKKWRCSRDVFAGHKYCERHMHRGRNRSRKPVET) constitute a WRC domain. 2 consecutive short sequence motifs (bipartite nuclear localization signal) follow at residues 149-159 (RCRRTDGKKWR) and 177-184 (RGRNRSRK). Polar residues-rich tracts occupy residues 299–350 (SLQE…RDQQ) and 383–398 (PTSVLHQLGVSTQAFH). A disordered region spans residues 299 to 398 (SLQEADNSSS…QLGVSTQAFH (100 aa)).

The protein belongs to the GRF family. In terms of tissue distribution, strongly expressed in actively growing and developing tissues, such as roots, upper stems, and shoot tips containing the shoot apical meristem (SAM) and flower buds. Also expressed in mature flowers, but weakly expressed in mature stems and leaves.

Its subcellular location is the nucleus. Functionally, transcription activator that plays a role in the regulation of cell expansion in leaf and cotyledons tissues. Component of a network formed by miR396, the GRFs and their interacting factors (GIFs) acting in the regulation of meristem function, at least partially through the control of cell proliferation. microRNA396-GRF1/GRF3 regulatory module acts as a developmental regulator in the reprogramming of root cells during cyst nematode infection, leading to the formation of the syncytium. The chain is Growth-regulating factor 3 (GRF3) from Arabidopsis thaliana (Mouse-ear cress).